The following is a 639-amino-acid chain: Sperm-associated antigen 16 protein (639 aa).

Residues 146-218 adopt a coiled-coil conformation; it reads DVYSQVMLLE…GLKLHYASYE (73 aa). The tract at residues 280–333 is disordered; it reads RESGDRAGHSCEKENSSEGPTQKSLREAREEVGYKSKLKNEKKDSEFPVDMQPD. Composition is skewed to basic and acidic residues over residues 281–295 and 303–325; these read ESGD…KENS and SLRE…KDSE. WD repeat units follow at residues 358-397, 400-439, 442-481, 484-523, 526-565, 568-608, and 609-639; these read LHEL…VLLT, GHTD…CTLT, GHNH…CRYT, GHTD…CEQS, GHMH…PIVS, VGPS…HKLV, and GHES…RLWI.

In terms of assembly, interacts with SPAG6 and STK36. In terms of processing, phosphorylated by TSSK2. As to expression, expressed in testis.

The protein localises to the cytoplasm. It is found in the cytoskeleton. Its subcellular location is the cilium axoneme. It localises to the flagellum axoneme. The protein resides in the cell projection. The protein localises to the cilium. It is found in the flagellum. Functionally, necessary for sperm flagellar function. Plays a role in motile ciliogenesis. May help to recruit STK36 to the cilium or apical surface of the cell to initiate subsequent steps of construction of the central pair apparatus of motile cilia. The sequence is that of Sperm-associated antigen 16 protein (Spag16) from Mus musculus (Mouse).